The following is a 205-amino-acid chain: Outer-membrane lipoprotein LolB (205 aa).

The N-terminal stretch at 1–17 is a signal peptide; the sequence is MFLRHVIVFSFIALLAG. The N-palmitoyl cysteine moiety is linked to residue Cys-18. A lipid anchor (S-diacylglycerol cysteine) is attached at Cys-18.

Belongs to the LolB family. As to quaternary structure, monomer.

It is found in the cell outer membrane. Plays a critical role in the incorporation of lipoproteins in the outer membrane after they are released by the LolA protein. In Pseudomonas fluorescens (strain Pf0-1), this protein is Outer-membrane lipoprotein LolB.